The sequence spans 183 residues: Type II secretion system protein H (183 aa).

The propeptide at 1–5 is leader sequence; the sequence is MRQRG. At Phe-6 the chain carries N-methylphenylalanine. A helical membrane pass occupies residues 6–26; sequence FTVLEMMLVVLLMGSAASLVI.

Type II secretion is composed of four main components: the outer membrane complex, the inner membrane complex, the cytoplasmic secretion ATPase and the periplasm-spanning pseudopilus. Interacts with core component PulG. Interacts with PulM. In terms of processing, cleaved by prepilin peptidase. Methylated by prepilin peptidase at the amino group of the N-terminal phenylalanine once the leader sequence is cleaved by prepilin peptidase.

It is found in the cell inner membrane. Component of the type II secretion system required for the energy-dependent secretion of extracellular factors such as proteases and toxins from the periplasm. Part of the pseudopilus tip complex that is critical for the recognition and binding of secretion substrates. This is Type II secretion system protein H (pulH) from Klebsiella michiganensis (strain ATCC 8724 / DSM 4798 / JCM 20051 / NBRC 3318 / NRRL B-199 / KCTC 1686 / BUCSAV 143 / CCM 1901).